A 631-amino-acid chain; its full sequence is Chaperone protein DnaK (631 aa).

Threonine 197 bears the Phosphothreonine; by autocatalysis mark. The disordered stretch occupies residues 598 to 631; that stretch reads MYKKEQGQTGGTEQGGTEQKKSGGDDDVIDAEVE. Positions 622–631 are enriched in acidic residues; that stretch reads DDDVIDAEVE.

It belongs to the heat shock protein 70 family.

Functionally, acts as a chaperone. The polypeptide is Chaperone protein DnaK (Nitratiruptor sp. (strain SB155-2)).